The following is a 266-amino-acid chain: Histidinol-phosphatase (266 aa).

4 residues coordinate Mg(2+): Glu69, Asp84, Ile86, and Asp87. Substrate is bound at residue Glu69. Substrate is bound by residues 86-89 (IDGT), Arg190, and Asp218. Position 218 (Asp218) interacts with Mg(2+).

Belongs to the inositol monophosphatase superfamily. Requires Mg(2+) as cofactor.

It catalyses the reaction L-histidinol phosphate + H2O = L-histidinol + phosphate. The protein operates within amino-acid biosynthesis; L-histidine biosynthesis; L-histidine from 5-phospho-alpha-D-ribose 1-diphosphate: step 8/9. Catalyzes the dephosphorylation of histidinol-phosphate to histidinol, the direct precursor of histidine. This chain is Histidinol-phosphatase, found in Streptomyces coelicolor (strain ATCC BAA-471 / A3(2) / M145).